The sequence spans 211 residues: ATP phosphoribosyltransferase (211 aa).

Belongs to the ATP phosphoribosyltransferase family. Short subfamily. As to quaternary structure, heteromultimer composed of HisG and HisZ subunits.

It is found in the cytoplasm. The catalysed reaction is 1-(5-phospho-beta-D-ribosyl)-ATP + diphosphate = 5-phospho-alpha-D-ribose 1-diphosphate + ATP. It participates in amino-acid biosynthesis; L-histidine biosynthesis; L-histidine from 5-phospho-alpha-D-ribose 1-diphosphate: step 1/9. In terms of biological role, catalyzes the condensation of ATP and 5-phosphoribose 1-diphosphate to form N'-(5'-phosphoribosyl)-ATP (PR-ATP). Has a crucial role in the pathway because the rate of histidine biosynthesis seems to be controlled primarily by regulation of HisG enzymatic activity. This Bacillus cereus (strain 03BB102) protein is ATP phosphoribosyltransferase.